We begin with the raw amino-acid sequence, 251 residues long: Probable transcriptional regulatory protein cbdbA400 (251 aa).

This sequence belongs to the TACO1 family.

It is found in the cytoplasm. This chain is Probable transcriptional regulatory protein cbdbA400, found in Dehalococcoides mccartyi (strain CBDB1).